The primary structure comprises 340 residues: Glyceraldehyde-3-phosphate dehydrogenase (340 aa).

NAD(+) contacts are provided by residues 12-13 (RI), D40, K85, and S128. D-glyceraldehyde 3-phosphate contacts are provided by residues 158–160 (SCT), T189, R204, 217–218 (TG), and R240. C159 acts as the Nucleophile in catalysis. K257 participates in a covalent cross-link: Isoglutamyl lysine isopeptide (Lys-Gln) (interchain with Q-Cter in protein Pup). NAD(+) is bound at residue N321.

This sequence belongs to the glyceraldehyde-3-phosphate dehydrogenase family. In terms of assembly, homotetramer.

The protein resides in the cytoplasm. It catalyses the reaction D-glyceraldehyde 3-phosphate + phosphate + NAD(+) = (2R)-3-phospho-glyceroyl phosphate + NADH + H(+). It participates in carbohydrate degradation; glycolysis; pyruvate from D-glyceraldehyde 3-phosphate: step 1/5. Functionally, catalyzes the oxidative phosphorylation of glyceraldehyde 3-phosphate (G3P) to 1,3-bisphosphoglycerate (BPG) using the cofactor NAD. The first reaction step involves the formation of a hemiacetal intermediate between G3P and a cysteine residue, and this hemiacetal intermediate is then oxidized to a thioester, with concomitant reduction of NAD to NADH. The reduced NADH is then exchanged with the second NAD, and the thioester is attacked by a nucleophilic inorganic phosphate to produce BPG. In Mycolicibacterium smegmatis (strain ATCC 700084 / mc(2)155) (Mycobacterium smegmatis), this protein is Glyceraldehyde-3-phosphate dehydrogenase (gapA).